A 340-amino-acid polypeptide reads, in one-letter code: Probable serine acetyltransferase 5 (340 aa).

Low complexity-rich tracts occupy residues 1 to 17 and 54 to 64; these read MLVVVARKSSSSARVAA and PAEVVPAFAPP. Residues 1–67 are disordered; the sequence is MLVVVARKSS…VPAFAPPESE (67 aa).

This sequence belongs to the transferase hexapeptide repeat family. In terms of assembly, homomultimer.

The catalysed reaction is L-serine + acetyl-CoA = O-acetyl-L-serine + CoA. It functions in the pathway amino-acid biosynthesis; L-cysteine biosynthesis; L-cysteine from L-serine: step 1/2. This chain is Probable serine acetyltransferase 5 (SAT5), found in Oryza sativa subsp. japonica (Rice).